We begin with the raw amino-acid sequence, 470 residues long: Macrophage metalloelastase (470 aa).

The first 16 residues, 1–16 (MKFLLILLLQATASGA), serve as a signal peptide directing secretion. Positions 17–105 (LPLNSSTSLE…DVHHFREMPG (89 aa)) are cleaved as a propeptide — activation peptide. An N-linked (GlcNAc...) asparagine glycan is attached at Asn-20. The short motif at 90–97 (PRCGVPDV) is the Cysteine switch element. Cys-92 contacts Zn(2+). The Ca(2+) site is built by Asp-124 and Asp-158. His-168 and Asp-170 together coordinate Zn(2+). Asp-175, Gly-176, Gly-178, and Ile-180 together coordinate Ca(2+). Zn(2+) is bound at residue His-183. 3 residues coordinate Ca(2+): Gly-190, Gly-192, and Asp-194. Position 196 (His-196) interacts with Zn(2+). Ca(2+) is bound by residues Asp-198, Glu-199, and Glu-201. Residue His-218 coordinates Zn(2+). The active site involves Glu-219. Residues His-222 and His-228 each contribute to the Zn(2+) site. 4 Hemopexin repeats span residues 279-328 (PALC…WPTL), 329-375 (PSGI…GFPN), 377-425 (VKKI…FQGI), and 426-470 (GPKI…WFGC). Cys-282 and Cys-470 are disulfide-bonded. N-linked (GlcNAc...) asparagine glycosylation occurs at Asn-285. Ca(2+) is bound by residues Asp-289, Glu-333, Asp-381, and Asp-430.

It belongs to the peptidase M10A family. Requires Ca(2+) as cofactor. Zn(2+) serves as cofactor. Found in alveolar macrophages but not in peripheral blood monocytes.

It localises to the secreted. The protein resides in the extracellular space. Its subcellular location is the extracellular matrix. The catalysed reaction is Hydrolysis of soluble and insoluble elastin. Specific cleavages are also produced at 14-Ala-|-Leu-15 and 16-Tyr-|-Leu-17 in the B chain of insulin.. In terms of biological role, may be involved in tissue injury and remodeling. Has significant elastolytic activity. Can accept large and small amino acids at the P1' site, but has a preference for leucine. Aromatic or hydrophobic residues are preferred at the P1 site, with small hydrophobic residues (preferably alanine) occupying P3. In Homo sapiens (Human), this protein is Macrophage metalloelastase (MMP12).